The sequence spans 249 residues: Ribosomal RNA small subunit methyltransferase J (249 aa).

Position 169 (Asp-169) interacts with S-adenosyl-L-methionine.

This sequence belongs to the methyltransferase superfamily. RsmJ family.

The protein resides in the cytoplasm. It carries out the reaction guanosine(1516) in 16S rRNA + S-adenosyl-L-methionine = N(2)-methylguanosine(1516) in 16S rRNA + S-adenosyl-L-homocysteine + H(+). In terms of biological role, specifically methylates the guanosine in position 1516 of 16S rRNA. The sequence is that of Ribosomal RNA small subunit methyltransferase J from Buchnera aphidicola subsp. Schizaphis graminum (strain Sg).